The chain runs to 156 residues: CD-NTase/cGAS isopeptidase (156 aa).

The MPN domain occupies 16 to 156; the sequence is LVVIMGHVVT…LITVFKKIES (141 aa). E39 acts as the Proton donor/acceptor in catalysis. Residues H101, H103, and D114 each coordinate Zn(2+). Positions 101–114 match the JAMM motif motif; the sequence is HTHPEDRPFPSATD.

This sequence belongs to the peptidase M67B family. Cap3 isopeptidase subfamily. Zn(2+) serves as cofactor.

With respect to regulation, cleavage of conjugated proteins is inhibited by EDTA. Metalloprotease priming reversal component of a CBASS system. CBASS (cyclic oligonucleotide-based antiphage signaling system) provides immunity against bacteriophages. The CD-NTase protein (DncV) synthesizes cyclic nucleotides in response to infection; these serve as specific second messenger signals. The signals activate a diverse range of effectors, leading to bacterial cell death and thus abortive phage infection. A type II-A(GA) CBASS system. Functionally, reverses the primed state of DncV, the CD-NTase. Cleaves a DncV-GFP (green fluorescent protein) fusion protein precisely at the C-terminus of DncV. Overexpression decreases the efficacy of CBASS protection against phages T2, T4, T5 and T6, blocks formation of DncV-conjugates in vivo, and inhibits in vivo activation of DncV. Antagonism of phage defense upon overexpression is CBASS-system specific, Cap3 from this bacteria only antagonizes its cognate CBASS system and not that of C.freundii, E.coli or E.hormaechei. In terms of biological role, protects E.coli against phage infection. When the CBASS operon (capV-dncV-cap2-cap3) is introduced in E.coli MG1655 there is about 100-fold protection against phages P1 and T2. When the operon is introduced in E.coli MG1655 there is a more than 10(3) decrease in the efficiency of T2 plaque formation. Protects 100-fold against phage T5, offers no protection against T7. When the operon is introduced in E.coli MG1655 it protects against phages T2, T4, T5 and T6. Another paper shows the operon confers protection against phages P1, T2, T5 and T6 but not T4 or lambda. This chain is CD-NTase/cGAS isopeptidase, found in Vibrio cholerae serotype O1 (strain ATCC 39315 / El Tor Inaba N16961).